Consider the following 252-residue polypeptide: Flagellar brake protein YcgR (252 aa).

One can recognise a PilZ domain in the interval 118 to 236 (QRREYFRVSI…EKGLQRAIFE (119 aa)).

Belongs to the YcgR family. As to quaternary structure, monomer. Interacts with the flagellar basal bodies.

It localises to the bacterial flagellum basal body. In terms of biological role, acts as a flagellar brake, regulating swimming and swarming in a bis-(3'-5') cyclic diguanylic acid (c-di-GMP)-dependent manner. Binds 1 c-di-GMP dimer per subunit. Increasing levels of c-di-GMP lead to decreased motility. The protein is Flagellar brake protein YcgR of Yersinia pseudotuberculosis serotype I (strain IP32953).